The primary structure comprises 366 residues: Isocitrate dehydrogenase [NAD] subunit alpha, mitochondrial (366 aa).

Residues 1-27 (MAGPAWISKVSRLLGAFHNQKQVTRGF) constitute a mitochondrion transit peptide. K77 carries the N6-succinyllysine modification. T101 carries the phosphothreonine modification. Substrate contacts are provided by R115, R125, and R146. K223 is subject to N6-acetyllysine. Mg(2+) contacts are provided by D233, D257, and D261. K343 is modified (N6-acetyllysine; alternate). K343 is subject to N6-succinyllysine; alternate. An N6-succinyllysine modification is found at K350.

Belongs to the isocitrate and isopropylmalate dehydrogenases family. In terms of assembly, heterooligomer of subunits alpha (IDH3A), beta (IDH3B), and gamma (IDH3G) in the apparent ratio of 2:1:1. The heterodimer containing one IDH3A and one IDH3B subunit and the heterodimer containing one IDH3A and one IDH3G subunit assemble into a heterotetramer (which contains two subunits of IDH3A, one of IDH3B and one of IDH3G) and further into the heterooctamer. Mg(2+) is required as a cofactor. The cofactor is Mn(2+).

It localises to the mitochondrion. It carries out the reaction D-threo-isocitrate + NAD(+) = 2-oxoglutarate + CO2 + NADH. Its activity is regulated as follows. The heterotetramer and the heterodimer composed of IDH3A and IDH3G subunits can be allosterically activated by citrate (CIT) or/and ADP, and the two activators can act independently or synergistically. The heterodimer composed of IDH3A and IDH3B subunits cannot be allosterically regulated and the allosteric regulation of the heterotetramer is through the IDH3G subunit and not the IDH3B subunit. The IDH3G subunit contains the allosteric site which consists of a CIT-binding site and an ADP-binding site, and the binding of CIT and ADP causes conformational changes at the allosteric site which are transmitted to the active site in the catalytic subunit (IDH3A) through a cascade of conformational changes at the heterodimer interface, leading to stabilization of the isocitrate-binding at the active site and thus activation of the enzyme. ATP can activate the heterotetramer and the heterodimer composed of IDH3A and IDH3G subunits at low concentrations but inhibits their activities at high concentrations, whereas ATP exhibits only inhibitory effect on the heterodimer composed of IDH3A and IDH3B subunits. Catalytic subunit of the enzyme which catalyzes the decarboxylation of isocitrate (ICT) into alpha-ketoglutarate. The heterodimer composed of the alpha (IDH3A) and beta (IDH3B) subunits and the heterodimer composed of the alpha (IDH3A) and gamma (IDH3G) subunits, have considerable basal activity but the full activity of the heterotetramer (containing two subunits of IDH3A, one of IDH3B and one of IDH3G) requires the assembly and cooperative function of both heterodimers. This is Isocitrate dehydrogenase [NAD] subunit alpha, mitochondrial from Bos taurus (Bovine).